A 78-amino-acid polypeptide reads, in one-letter code: Large ribosomal subunit protein eL20 (78 aa).

It belongs to the eukaryotic ribosomal protein eL20 family. Part of the 50S ribosomal subunit. Binds 23S rRNA.

The protein is Large ribosomal subunit protein eL20 of Nanoarchaeum equitans (strain Kin4-M).